The chain runs to 352 residues: Ferrochelatase (352 aa).

Residues His222 and Glu303 each contribute to the Fe cation site.

The protein belongs to the ferrochelatase family.

The protein resides in the cytoplasm. The enzyme catalyses heme b + 2 H(+) = protoporphyrin IX + Fe(2+). It participates in porphyrin-containing compound metabolism; protoheme biosynthesis; protoheme from protoporphyrin-IX: step 1/1. Functionally, catalyzes the ferrous insertion into protoporphyrin IX. The polypeptide is Ferrochelatase (Brucella abortus (strain S19)).